Consider the following 290-residue polypeptide: Formamidopyrimidine-DNA glycosylase (290 aa).

Residue proline 2 is the Schiff-base intermediate with DNA of the active site. Glutamate 3 serves as the catalytic Proton donor. Lysine 58 serves as the catalytic Proton donor; for beta-elimination activity. DNA contacts are provided by histidine 98, arginine 126, and arginine 171. The segment at 256–290 (FVYDRAGLPCRVCATPVRQIVQGQRSTFYCPKCQH) adopts an FPG-type zinc-finger fold. Arginine 280 acts as the Proton donor; for delta-elimination activity in catalysis.

Belongs to the FPG family. As to quaternary structure, monomer. Zn(2+) is required as a cofactor.

It carries out the reaction Hydrolysis of DNA containing ring-opened 7-methylguanine residues, releasing 2,6-diamino-4-hydroxy-5-(N-methyl)formamidopyrimidine.. The catalysed reaction is 2'-deoxyribonucleotide-(2'-deoxyribose 5'-phosphate)-2'-deoxyribonucleotide-DNA = a 3'-end 2'-deoxyribonucleotide-(2,3-dehydro-2,3-deoxyribose 5'-phosphate)-DNA + a 5'-end 5'-phospho-2'-deoxyribonucleoside-DNA + H(+). In terms of biological role, involved in base excision repair of DNA damaged by oxidation or by mutagenic agents. Acts as a DNA glycosylase that recognizes and removes damaged bases. Has a preference for oxidized purines, such as 7,8-dihydro-8-oxoguanine (8-oxoG). Has AP (apurinic/apyrimidinic) lyase activity and introduces nicks in the DNA strand. Cleaves the DNA backbone by beta-delta elimination to generate a single-strand break at the site of the removed base with both 3'- and 5'-phosphates. The sequence is that of Formamidopyrimidine-DNA glycosylase from Cupriavidus taiwanensis (strain DSM 17343 / BCRC 17206 / CCUG 44338 / CIP 107171 / LMG 19424 / R1) (Ralstonia taiwanensis (strain LMG 19424)).